We begin with the raw amino-acid sequence, 203 residues long: Cytochrome c oxidase assembly protein CtaG (203 aa).

Topologically, residues 1-16 (MADQQEKDQKLKKQQR) are cytoplasmic. A helical; Signal-anchor for type II membrane protein membrane pass occupies residues 17 to 39 (SNATIAFACLSFFVCMIGAAYAS). Residues 40-203 (VPLYRIFCQV…VKAETPTNGS (164 aa)) lie on the Periplasmic side of the membrane.

Belongs to the COX11/CtaG family.

The protein localises to the cell inner membrane. Exerts its effect at some terminal stage of cytochrome c oxidase synthesis, probably by being involved in the insertion of the copper B into subunit I. This chain is Cytochrome c oxidase assembly protein CtaG, found in Brucella anthropi (strain ATCC 49188 / DSM 6882 / CCUG 24695 / JCM 21032 / LMG 3331 / NBRC 15819 / NCTC 12168 / Alc 37) (Ochrobactrum anthropi).